Consider the following 50-residue polypeptide: U23-theraphotoxin-Cg1a 2 (50 aa).

Intrachain disulfides connect Cys-22–Cys-36, Cys-29–Cys-41, and Cys-35–Cys-47.

Belongs to the neurotoxin 10 (Hwtx-1) family. 64 (Jztx-20) subfamily. Expressed by the venom gland.

Its subcellular location is the secreted. Functionally, probable ion channel inhibitor. The chain is U23-theraphotoxin-Cg1a 2 from Chilobrachys guangxiensis (Chinese earth tiger tarantula).